A 436-amino-acid polypeptide reads, in one-letter code: Elongation factor 1-gamma-A (436 aa).

Residues 2 to 87 (AGGTLYTYPD…YVGNDELRGT (86 aa)) form the GST N-terminal domain. The GST C-terminal domain maps to 88–221 (TRLHQAQVIQ…KMAQFDAKKF (134 aa)). 2 stretches are compositionally biased toward basic and acidic residues: residues 221–249 (FAEMQPKKETPKKEKPAKEPKKEKEEKKK) and 265–278 (SEKALAAEPKSKDP). Residues 221-278 (FAEMQPKKETPKKEKPAKEPKKEKEEKKKAAPTPAPAPEDDLDESEKALAAEPKSKDP) form a disordered region. Positions 275–436 (SKDPYAHLPK…KPFNQGKIFK (162 aa)) constitute an EF-1-gamma C-terminal domain.

As to quaternary structure, EF-1 is composed of four subunits: alpha, beta, delta, and gamma. In terms of processing, phosphorylated by CDK1. The N-terminus is blocked.

Its function is as follows. Probably plays a role in anchoring the complex to other cellular components. The sequence is that of Elongation factor 1-gamma-A (eef1g-a) from Xenopus laevis (African clawed frog).